The following is a 1101-amino-acid chain: Isoleucine--tRNA ligase (1101 aa).

The 'HIGH' region signature appears at 50–60; that stretch reads PFANGLPHYGH. The short motif at 629 to 633 is the 'KMSKS' region element; that stretch reads KLSKR. Residue K632 participates in ATP binding.

The protein belongs to the class-I aminoacyl-tRNA synthetase family. IleS type 2 subfamily. As to quaternary structure, monomer. Requires Zn(2+) as cofactor.

The protein localises to the cytoplasm. It carries out the reaction tRNA(Ile) + L-isoleucine + ATP = L-isoleucyl-tRNA(Ile) + AMP + diphosphate. Functionally, catalyzes the attachment of isoleucine to tRNA(Ile). As IleRS can inadvertently accommodate and process structurally similar amino acids such as valine, to avoid such errors it has two additional distinct tRNA(Ile)-dependent editing activities. One activity is designated as 'pretransfer' editing and involves the hydrolysis of activated Val-AMP. The other activity is designated 'posttransfer' editing and involves deacylation of mischarged Val-tRNA(Ile). The polypeptide is Isoleucine--tRNA ligase (Anaplasma marginale (strain St. Maries)).